Here is a 596-residue protein sequence, read N- to C-terminus: MATGENRTVPDNLKKQLAVSVRNIQWSYGIFWSVSASQPGVLEWGDGYYNGDIKTRKTIQAAEVKIDQLGLERSEQLRELYESLSLAESSASGSSQVTRRASAAALSPEDLTDTEWYYLVCMSFVFNIGEGIPGGALSNGEPIWLCNAETADSKVFTRSLLAKSASLQTVVCFPFLGGVLEIGTTEHIKEDMNVIQSVKTLFLEAPPYTTISTRSDYQEIFDPLSDDKYTPVFITEAFPTTSTSGFEQEPEDHDSFINDGGASQVQSWQFVGEEISNCIHQSLNSSDCVSQTFVGTTGRLACDPRKSRIQRLGQIQEQSNHVNMDDDVHYQGVISTIFKTTHQLILGPQFQNFDKRSSFTRWKRSSSVKTLGEKSQKMIKKILFEVPLMNKKEELLPDTPEETGNHALSEKKRREKLNERFMTLRSIIPSISKIDKVSILDDTIEYLQDLQKRVQELESCRESADTETRITMMKRKKPDDEEERASANCMNSKRKGSDVNVGEDEPADIGYAGLTDNLRISSLGNEVVIELRCAWREGILLEIMDVISDLNLDSHSVQSSTGDGLLCLTVNCKHKGTKIATTGMIQEALQRVAWIC.

The bHLH domain maps to 401–450 (EETGNHALSEKKRREKLNERFMTLRSIIPSISKIDKVSILDDTIEYLQDL).

In terms of assembly, efficient DNA binding requires dimerization with another bHLH protein. Homodimer and heterodimer with GL3. Interacts with CPC, MYB0/GL1, MYB5, MYB23, MYB113, MYB114, MYB75/PAP1, MYB90/PAP2, TT2, TRY, TTG1 and MYB66/WER. In terms of tissue distribution, ubiquitous with higher levels in buds and flowers. Specifically localized in developing root hair cells. Expressed in epidermal root hair cells (trichoblasts) and moves to root hairless cells (atrichoblasts) by a cell-to-cell movement through plasmodesmata (at protein level).

The protein localises to the nucleus. In terms of biological role, transcription activator, when associated with MYB75/PAP1, MYB90/PAP2 or TT2. Involved in epidermal cell fate specification. Negatively regulates stomata formation but promotes trichome formation. Together with MYB66/WER, promotes the formation of non-hair cells in root epidermis cells in the N position. Whereas together with CPC, promotes the formation of hair cells in root epidermis cells in the H position by inhibiting non-hair cell formation. Also seems to play a role in the activation of anthocyanin biosynthesis, probably together with MYB75/PAP1. Involved in seed mucilage production. Activates the transcription of GL2. The chain is Transcription factor EGL1 (BHLH2) from Arabidopsis thaliana (Mouse-ear cress).